Reading from the N-terminus, the 63-residue chain is Large ribosomal subunit protein bL28 (63 aa).

It belongs to the bacterial ribosomal protein bL28 family.

The polypeptide is Large ribosomal subunit protein bL28 (Brachyspira hyodysenteriae (strain ATCC 49526 / WA1)).